Here is a 637-residue protein sequence, read N- to C-terminus: Probable membrane transporter protein MamO (637 aa).

Over 1 to 24 (MIEVGETMGELPTNKIVFCERSWK) the chain is Cytoplasmic. A helical transmembrane segment spans residues 25–45 (TPVSILAFLIFVTFAWGIYLL). The Lumenal portion of the chain corresponds to 46-352 (DHYDEDDNFH…AKIGGYSVAD (307 aa)). A protease-like region spans residues 78–268 (LYHTVPPAVV…VIVSHLQDVV (191 aa)). Residues His-148 and His-263 each contribute to the a divalent metal cation site. Residues 353-373 (IVGLVMLALAAGVTGGMMTMG) form a helical membrane-spanning segment. Residues 370 to 637 (MTMGGGVLQV…AIALKMLTSV (268 aa)) form a TSUP-like region. The Cytoplasmic portion of the chain corresponds to 374–378 (GGVLQ). Residues 379–399 (VAGMMVFFGYGMYLIRPVVFL) traverse the membrane as a helical segment. The Lumenal portion of the chain corresponds to 400-416 (TNVVVYGAASLRNDKAQ). A helical membrane pass occupies residues 417–437 (LVQWDKVKPLIPWGIAGVILG). Tyr-438 is a topological domain (cytoplasmic). Residues 439-459 (FIGNAIGDSVVGILLGLFALI) form a helical membrane-spanning segment. The Lumenal segment spans residues 460–517 (MAGKAVMEILQPNAGEETAESISATEAEDEMDELMALADGTSRPKASGLALPEGHARS). Residues 518-538 (AVLGLPMGLFSGILGISGGVI) traverse the membrane as a helical segment. The Cytoplasmic segment spans residues 539–554 (EVPLQRYVGRISLQNA). The chain crosses the membrane as a helical span at residues 555–575 (IANSSVLVFWASVAGSVVAFL). The Lumenal portion of the chain corresponds to 576-586 (HGSSTGLIHWE). The chain crosses the membrane as a helical span at residues 587–607 (APVTLALVMIPGAYVGGIIGA). Topologically, residues 608-616 (RLMRVLPVR) are cytoplasmic. A helical transmembrane segment spans residues 617–637 (VLKGVYAATMAAIALKMLTSV).

It in the N-terminal section; belongs to the peptidase S1C family. In the C-terminal section; belongs to the 4-toluene sulfonate uptake permease (TSUP) (TC 2.A.102) family. The cofactor is a metal cation. Post-translationally, subject to proteolytic cleavage by MamE.

Its subcellular location is the magnetosome membrane. Plays 2 roles; promotes magnetite nucleation/formation and activates the MamE protease. Despite its near conservation of a protease-like sequence, this is probably not a protease. Required in conjunction with MamP for proteolysis of at least MamE, itself and MamP. May transport a solute that controls MamE's protease activity. May place individual iron atoms into the magnetite lattice. This chain is Probable membrane transporter protein MamO (mamO), found in Paramagnetospirillum magneticum (strain ATCC 700264 / AMB-1) (Magnetospirillum magneticum).